We begin with the raw amino-acid sequence, 231 residues long: Large ribosomal subunit protein uL3 (231 aa).

Q151 bears the N5-methylglutamine mark.

This sequence belongs to the universal ribosomal protein uL3 family. Part of the 50S ribosomal subunit. Forms a cluster with proteins L14 and L19. In terms of processing, methylated by PrmB.

Its function is as follows. One of the primary rRNA binding proteins, it binds directly near the 3'-end of the 23S rRNA, where it nucleates assembly of the 50S subunit. The polypeptide is Large ribosomal subunit protein uL3 (Granulibacter bethesdensis (strain ATCC BAA-1260 / CGDNIH1)).